The chain runs to 561 residues: Urocanate hydratase (561 aa).

NAD(+) contacts are provided by residues 52–53, glutamine 130, 176–178, glutamate 196, arginine 201, 242–243, 263–267, 273–274, and tyrosine 322; these read GG, GMG, NA, QTSAH, and YL. The active site involves cysteine 410. Glycine 492 serves as a coordination point for NAD(+).

Belongs to the urocanase family. The cofactor is NAD(+).

It localises to the cytoplasm. The catalysed reaction is 4-imidazolone-5-propanoate = trans-urocanate + H2O. Its pathway is amino-acid degradation; L-histidine degradation into L-glutamate; N-formimidoyl-L-glutamate from L-histidine: step 2/3. Its function is as follows. Catalyzes the conversion of urocanate to 4-imidazolone-5-propionate. The sequence is that of Urocanate hydratase from Salmonella agona (strain SL483).